A 424-amino-acid polypeptide reads, in one-letter code: UDP-N-acetylglucosamine 1-carboxyvinyltransferase (424 aa).

22-23 (KN) serves as a coordination point for phosphoenolpyruvate. Residue arginine 93 participates in UDP-N-acetyl-alpha-D-glucosamine binding. Catalysis depends on cysteine 117, which acts as the Proton donor. Position 117 is a 2-(S-cysteinyl)pyruvic acid O-phosphothioketal (cysteine 117). Residues 122–126 (RPIDL), aspartate 307, and valine 329 each bind UDP-N-acetyl-alpha-D-glucosamine.

The protein belongs to the EPSP synthase family. MurA subfamily.

It is found in the cytoplasm. It catalyses the reaction phosphoenolpyruvate + UDP-N-acetyl-alpha-D-glucosamine = UDP-N-acetyl-3-O-(1-carboxyvinyl)-alpha-D-glucosamine + phosphate. It participates in cell wall biogenesis; peptidoglycan biosynthesis. Functionally, cell wall formation. Adds enolpyruvyl to UDP-N-acetylglucosamine. The protein is UDP-N-acetylglucosamine 1-carboxyvinyltransferase of Chlorobium luteolum (strain DSM 273 / BCRC 81028 / 2530) (Pelodictyon luteolum).